Consider the following 372-residue polypeptide: Glutamate 5-kinase (372 aa).

Lysine 14 lines the ATP pocket. Substrate-binding residues include serine 54, aspartate 141, and asparagine 153. ATP is bound at residue 173-174 (TD). The 79-residue stretch at 280 to 358 (RGTLVLDAGA…DAIESILGYS (79 aa)) folds into the PUA domain.

It belongs to the glutamate 5-kinase family.

Its subcellular location is the cytoplasm. It catalyses the reaction L-glutamate + ATP = L-glutamyl 5-phosphate + ADP. It functions in the pathway amino-acid biosynthesis; L-proline biosynthesis; L-glutamate 5-semialdehyde from L-glutamate: step 1/2. Its function is as follows. Catalyzes the transfer of a phosphate group to glutamate to form L-glutamate 5-phosphate. The sequence is that of Glutamate 5-kinase from Pseudomonas putida (strain GB-1).